The chain runs to 79 residues: Beta-hexatoxin-Mg1a (79 aa).

A signal peptide spans 1 to 20 (MKAPATTLILVMSLISVLWA). A propeptide spanning residues 21–50 (TPDLEEGDLLAELGDLIATDDEYPMKPEER) is cleaved from the precursor. Intrachain disulfides connect cysteine 52-cysteine 66, cysteine 59-cysteine 71, and cysteine 65-cysteine 76.

This sequence belongs to the neurotoxin 15 family. 01 (magi-5) subfamily. As to expression, expressed by the venom gland.

The protein resides in the secreted. In terms of biological role, insect and vertebrate active toxin. Binds to site 4 of mammalian voltage-gated sodium channels and shifts the activation voltage of the mammalian Nav1.2a/SCN2A channel to more hyperpolarized voltages, whereas the insect channel, DmNav1 (para), is not affected. Competes for binding at site 3 of the insect sodium channel. Causes temporary paralysis when injected into lepidopteran larvae at 8.6 nmol/g. A low intracranial injection dose into mice causes lacrimation, closure of the eyes and sweating. A high injection dose causes extensive lacrimation and death. This Macrothele gigas (Japanese funnel web spider) protein is Beta-hexatoxin-Mg1a.